The following is a 239-amino-acid chain: Octanoyltransferase (239 aa).

Residues 48–236 (EGGDELVWLV…AFETVFGETT (189 aa)) enclose the BPL/LPL catalytic domain. Substrate contacts are provided by residues 87–94 (RGGEYTYH), 167–169 (ALG), and 180–182 (GLS). The Acyl-thioester intermediate role is filled by Cys198.

This sequence belongs to the LipB family.

Its subcellular location is the cytoplasm. It catalyses the reaction octanoyl-[ACP] + L-lysyl-[protein] = N(6)-octanoyl-L-lysyl-[protein] + holo-[ACP] + H(+). Its pathway is protein modification; protein lipoylation via endogenous pathway; protein N(6)-(lipoyl)lysine from octanoyl-[acyl-carrier-protein]: step 1/2. Catalyzes the transfer of endogenously produced octanoic acid from octanoyl-acyl-carrier-protein onto the lipoyl domains of lipoate-dependent enzymes. Lipoyl-ACP can also act as a substrate although octanoyl-ACP is likely to be the physiological substrate. This Rhizobium etli (strain ATCC 51251 / DSM 11541 / JCM 21823 / NBRC 15573 / CFN 42) protein is Octanoyltransferase.